The following is a 138-amino-acid chain: Acidic phospholipase A2 VpaPLA2 (138 aa).

Residues 1 to 16 form the signal peptide; the sequence is MRTLWIVAVCLMGVEG. Cystine bridges form between Cys42/Cys131, Cys44/Cys60, Cys59/Cys111, Cys65/Cys138, Cys66/Cys104, Cys73/Cys97, and Cys91/Cys102. Ca(2+) contacts are provided by Tyr43, Gly45, and Gly47. His63 is a catalytic residue. Asp64 contacts Ca(2+). Residue Asp105 is part of the active site.

It belongs to the phospholipase A2 family. Group II subfamily. D49 sub-subfamily. The cofactor is Ca(2+). As to expression, expressed by the venom gland.

The protein localises to the secreted. It catalyses the reaction a 1,2-diacyl-sn-glycero-3-phosphocholine + H2O = a 1-acyl-sn-glycero-3-phosphocholine + a fatty acid + H(+). Functionally, snake venom phospholipase A2 (PLA2) that causes a sudden decrease of arterial blood pressure when injected into rat, but is not lethal. When co-injected with an uncharacterized basic protein (which did not show any enzymatic activity, but also causes a drop in blood pressure), this synergistical mixture is lethal. PLA2 catalyzes the calcium-dependent hydrolysis of the 2-acyl groups in 3-sn-phosphoglycerides. This is Acidic phospholipase A2 VpaPLA2 from Daboia palaestinae (Palestine viper).